Consider the following 123-residue polypeptide: MGSCGGKHTGKGAPKPYSRNFTDPWRKTPGRLFGTALIRFYQITLSSLIGNSCRHLPTCSEYAYEAIARHGLWRGGWMGFFRVVRCGPFGTHGFDPVPRELSPDLKWYMPWRYWRCSASRIGK.

The interval methionine 1–aspartate 23 is disordered.

It belongs to the UPF0161 family.

It is found in the cell inner membrane. Its function is as follows. Could be involved in insertion of integral membrane proteins into the membrane. The chain is Putative membrane protein insertion efficiency factor from Brucella abortus (strain 2308).